We begin with the raw amino-acid sequence, 277 residues long: Peptide deformylase 1A, chloroplastic (277 aa).

Cys-196 and His-238 together coordinate Zn(2+). Glu-239 is a catalytic residue. His-242 contributes to the Zn(2+) binding site.

It belongs to the polypeptide deformylase family. It depends on Zn(2+) as a cofactor.

It is found in the plastid. The protein localises to the chloroplast stroma. The enzyme catalyses N-terminal N-formyl-L-methionyl-[peptide] + H2O = N-terminal L-methionyl-[peptide] + formate. In terms of biological role, removes the formyl group from the N-terminal Met of newly synthesized proteins. This chain is Peptide deformylase 1A, chloroplastic (PDF1A), found in Solanum lycopersicum (Tomato).